A 237-amino-acid chain; its full sequence is Urease accessory protein UreF (237 aa).

Belongs to the UreF family. UreD, UreF and UreG form a complex that acts as a GTP-hydrolysis-dependent molecular chaperone, activating the urease apoprotein by helping to assemble the nickel containing metallocenter of UreC. The UreE protein probably delivers the nickel.

It localises to the cytoplasm. Required for maturation of urease via the functional incorporation of the urease nickel metallocenter. The sequence is that of Urease accessory protein UreF from Rhodopseudomonas palustris (strain HaA2).